The chain runs to 101 residues: Urease subunit beta (101 aa).

It belongs to the urease beta subunit family. Heterotrimer of UreA (gamma), UreB (beta) and UreC (alpha) subunits. Three heterotrimers associate to form the active enzyme.

The protein localises to the cytoplasm. The enzyme catalyses urea + 2 H2O + H(+) = hydrogencarbonate + 2 NH4(+). It participates in nitrogen metabolism; urea degradation; CO(2) and NH(3) from urea (urease route): step 1/1. The chain is Urease subunit beta from Variovorax paradoxus (strain S110).